Reading from the N-terminus, the 204-residue chain is THO complex subunit 7 homolog (204 aa).

N-acetylglycine is present on Gly-2. Thr-5 bears the Phosphothreonine mark. N6-acetyllysine is present on Lys-36. The tract at residues 50 to 137 is interaction with THOC5; that stretch reads YQRMLSTLSQ…HHPDRHETLK (88 aa). Residues 105–204 are interaction with NIF3L1; the sequence is QILQAKRIRK…ESTMEADPKP (100 aa). A coiled-coil region spans residues 146-204; it reads LEHLSHIKESVEDKLELRRKQFHVLLSTIHELQQTLENDDKLSEVDEAQESTMEADPKP. The tract at residues 182–204 is disordered; it reads ENDDKLSEVDEAQESTMEADPKP.

Belongs to the THOC7 family. In terms of assembly, tetramer; as part of a THO-DDX39B complex. Component of the THO subcomplex, which is composed of THOC1, THOC2, THOC3, THOC5, THOC6 and THOC7. Component of the transcription/export (TREX) complex at least composed of ALYREF/THOC4, DDX39B, SARNP/CIP29, CHTOP and the THO subcomplex; in the complex interacts with THOC1, THOC2 and THOC5; forms a coiled-coil dimer with THOC5; together with THOC5 and THOC6, plays a key structural role in the oligomerization of the THO-DDX39B complex. TREX seems to have a dynamic structure involving ATP-dependent remodeling. Interacts with NIF3L1. In terms of tissue distribution, ubiquitously expressed.

The protein resides in the cytoplasm. It localises to the nucleus. It is found in the nucleus speckle. In terms of biological role, component of the THO subcomplex of the TREX complex which is thought to couple mRNA transcription, processing and nuclear export, and which specifically associates with spliced mRNA and not with unspliced pre-mRNA. Required for efficient export of polyadenylated RNA. Plays a key structural role in the oligomerization of the THO-DDX39B complex. TREX is recruited to spliced mRNAs by a transcription-independent mechanism, binds to mRNA upstream of the exon-junction complex (EJC) and is recruited in a splicing- and cap-dependent manner to a region near the 5' end of the mRNA where it functions in mRNA export to the cytoplasm via the TAP/NXF1 pathway. In Mus musculus (Mouse), this protein is THO complex subunit 7 homolog (Thoc7).